The sequence spans 1091 residues: Integrin alpha-6 (1091 aa).

Positions 1 to 23 (MAVAGQLCLLYLSAGLLARLGTA) are cleaved as a signal peptide. The Extracellular portion of the chain corresponds to 24–1011 (FNLDTREDNV…FPSKTVAQYS (988 aa)). 7 FG-GAP repeats span residues 30–95 (EDNV…GPCT), 101–166 (NDAD…IEDD), 176–229 (DGRL…FFDM), 244–300 (DHDE…KSAH), 301–363 (LLPE…KWSN), 364–419 (VKPI…GIIT), and 420–479 (KPTQ…VTPN). The N-linked (GlcNAc...) asparagine glycan is linked to Asn78. 3 cysteine pairs are disulfide-bonded: Cys86–Cys94, Cys131–Cys154, and Cys175–Cys188. Residues Asn223 and Asn284 are each glycosylated (N-linked (GlcNAc...) asparagine). Ca(2+) is bound by residues Asp324, Asn326, Asp328, and Asp332. An N-linked (GlcNAc...) asparagine glycan is attached at Asn370. Residues Asp386, Asn388, Asp390, Tyr392, Asp394, Asp441, Asp443, Asn445, Tyr447, and Asp449 each contribute to the Ca(2+) site. 4 cysteine pairs are disulfide-bonded: Cys489–Cys496, Cys502–Cys562, Cys626–Cys632, and Cys726–Cys737. N-linked (GlcNAc...) asparagine glycans are attached at residues Asn731, Asn746, and Asn927. Cystine bridges form between Cys881-Cys928 and Cys934-Cys939. Residue Asn958 is glycosylated (N-linked (GlcNAc...) asparagine). A helical membrane pass occupies residues 1012–1037 (GVAWWIILLAVLAGILMLALLVFLLW). Residues 1038–1091 (KCGFFKRSRYDDSIPRYHAVRIRKEEREIKDEKHMDNLEKKQWITKWNENESYS) lie on the Cytoplasmic side of the membrane. Residue Cys1039 is the site of S-palmitoyl cysteine; by DHHC3 attachment. Residues 1040-1044 (GFFKR) carry the GFFKR motif motif. Arg1064 is modified (phosphoserine).

Belongs to the integrin alpha chain family. As to quaternary structure, heterodimer of an alpha and a beta subunit. The alpha subunit is composed of a heavy and a light chain linked by a disulfide bond. Alpha-6 associates with either beta-1 (ITGB1) or beta-4 (ITGB4) to form ITGA6:ITGB1 and ITGA6:ITGB4, respectively. ITGA6:ITGB1 is found in a complex with CD9; interaction takes place in oocytes and is involved in sperm-egg fusion. ITGA6:ITGB4 is found in a ternary complex with NRG1 and ERBB3. ITGA6:ITGB4 is found in a ternary complex with IGF1 and IGF1R. ITGA6:ITGB4 interacts with IGF2. Interacts with ADAM9. Interacts with RAB21. Interacts with MDK. ITGA6:ITGB1 interacts with MDK; this interaction mediates MDK-induced neurite outgrowth. Interacts with CD82; this interaction down-regulates ITGA6-mediated cell adhesion. Isoforms containing segment A, but not segment B, are the major targets for PMA-induced phosphorylation. Phosphorylation occurs on 'Ser-1064' of isoform alpha-6X1A. Phosphorylation is not required for the induction of integrin alpha-6A/beta-1 high affinity but may reduce the affinity for ligand. Post-translationally, undergoes PLAU-mediated cleavage at residues Arg-595-596-Arg in a time-dependent manner to produce processed integrin alpha-6 (alpha6p). In terms of processing, palmitoylation by DHHC3 enhances stability and cell surface expression. In terms of tissue distribution, expressed at low levels in normal skin tissue with elevated levels in skin tumors.

It is found in the cell membrane. Integrin alpha-6/beta-1 (ITGA6:ITGB1) is a receptor for laminin on platelets. Integrin alpha-6/beta-1 (ITGA6:ITGB1) is present in oocytes and is involved in sperm-egg fusion. Integrin alpha-6/beta-4 (ITGA6:ITGB4) is a receptor for laminin in epithelial cells and it plays a critical structural role in the hemidesmosome. ITGA6:ITGB4 binds to NRG1 (via EGF domain) and this binding is essential for NRG1-ERBB signaling. ITGA6:ITGB4 binds to IGF1 and this binding is essential for IGF1 signaling. ITGA6:ITGB4 binds to IGF2 and this binding is essential for IGF2 signaling. The protein is Integrin alpha-6 (Itga6) of Mus musculus (Mouse).